The following is a 366-amino-acid chain: MEEAALGEAELNWSRLSVSAEALESELEARAEERRGAREALLRLLLPYNRLTSLPRALGGGFPHLQLLDVSGNSLTALGPELLTLSGLRTLLARNNRLGGPGSLPKGLAQSPLCRSLQVLNLSGNCFQELPASLLELRALQTLSLGGNQLQSIPAEIENLRSLECLYLGGNFIKEIPPELANLPSLNYLVLCDNKIQSVPPQLSQLHSLRSLSLHNNLLTYLPREILNLIHLEELSLRGNPLVVRFVRDLTYDPPTLLELAARTIKIRSISYTPYDLPGNLLRYLGSASNCPNPKCGGVYFDCCVRQIKFVDFCGKYRLPLMHYLCSPECSSPCSSASHSSTSQSESDSEDEASVAAHRMQKVLLG.

The residue at position 19 (Ser-19) is a Phosphoserine. LRR repeat units lie at residues 40 to 61 (ALLR…LGGG), 64 to 86 (HLQL…LTLS), 87 to 108 (GLRT…PKGL), 116 to 138 (SLQV…LELR), 139 to 161 (ALQT…ENLR), 162 to 184 (SLEC…ANLP), 185 to 206 (SLNY…LSQL), 208 to 229 (SLRS…ILNL), and 231 to 251 (HLEE…RDLT). Residues 337-346 (ASHSSTSQSE) are compositionally biased toward low complexity. The disordered stretch occupies residues 337-356 (ASHSSTSQSESDSEDEASVA).

In Mus musculus (Mouse), this protein is Leucine-rich repeat-containing protein 58 (Lrrc58).